The chain runs to 69 residues: Putative membrane protein insertion efficiency factor (69 aa).

The protein belongs to the UPF0161 family.

It is found in the cell inner membrane. Could be involved in insertion of integral membrane proteins into the membrane. This Syntrophotalea carbinolica (strain DSM 2380 / NBRC 103641 / GraBd1) (Pelobacter carbinolicus) protein is Putative membrane protein insertion efficiency factor.